Here is a 120-residue protein sequence, read N- to C-terminus: Small ribosomal subunit protein eS24 (120 aa).

Residues 101 to 120 (RDAGTKQKKGGSKGGQGAKG) form a disordered region.

This sequence belongs to the eukaryotic ribosomal protein eS24 family.

The sequence is that of Small ribosomal subunit protein eS24 from Saccharolobus islandicus (strain Y.N.15.51 / Yellowstone #2) (Sulfolobus islandicus).